Here is a 97-residue protein sequence, read N- to C-terminus: Na(+)/H(+) antiporter subunit F1 (97 aa).

Helical transmembrane passes span 3–23 (HNVI…AMLI), 35–55 (VVAL…FSIL), and 60–80 (YMIV…AVFS).

The protein belongs to the CPA3 antiporters (TC 2.A.63) subunit F family. As to quaternary structure, may form a heterooligomeric complex that consists of seven subunits: mnhA1, mnhB1, mnhC1, mnhD1, mnhE1, mnhF1 and mnhG1.

The protein localises to the cell membrane. Its function is as follows. Mnh complex is a Na(+)/H(+) antiporter involved in Na(+) excretion. This is Na(+)/H(+) antiporter subunit F1 (mnhF1) from Staphylococcus aureus (strain Mu3 / ATCC 700698).